Consider the following 163-residue polypeptide: Crossover junction endodeoxyribonuclease RuvC (163 aa).

Active-site residues include D7, E68, and H142. The Mg(2+) site is built by D7, E68, and H142.

The protein belongs to the RuvC family. Homodimer which binds Holliday junction (HJ) DNA. The HJ becomes 2-fold symmetrical on binding to RuvC with unstacked arms; it has a different conformation from HJ DNA in complex with RuvA. In the full resolvosome a probable DNA-RuvA(4)-RuvB(12)-RuvC(2) complex forms which resolves the HJ. Mg(2+) serves as cofactor.

The protein resides in the cytoplasm. It carries out the reaction Endonucleolytic cleavage at a junction such as a reciprocal single-stranded crossover between two homologous DNA duplexes (Holliday junction).. The RuvA-RuvB-RuvC complex processes Holliday junction (HJ) DNA during genetic recombination and DNA repair. Endonuclease that resolves HJ intermediates. Cleaves cruciform DNA by making single-stranded nicks across the HJ at symmetrical positions within the homologous arms, yielding a 5'-phosphate and a 3'-hydroxyl group; requires a central core of homology in the junction. The consensus cleavage sequence is 5'-(A/T)TT(C/G)-3'. Cleavage occurs on the 3'-side of the TT dinucleotide at the point of strand exchange. HJ branch migration catalyzed by RuvA-RuvB allows RuvC to scan DNA until it finds its consensus sequence, where it cleaves and resolves the cruciform DNA. This chain is Crossover junction endodeoxyribonuclease RuvC, found in Anaplasma phagocytophilum (strain HZ).